Consider the following 751-residue polypeptide: WD repeat-containing protein 91 (751 aa).

Residues Q183–E205 adopt a coiled-coil conformation. The tract at residues E237–Q398 is disordered. Polar residues predominate over residues L238–A267. Residues T356–T373 show a composition bias toward basic and acidic residues. WD repeat units lie at residues E410–A449, I452–E492, S517–Q559, P564–S603, A606–S645, V668–E706, and G713–S751.

It belongs to the WD repeat WDR91 family.

Its subcellular location is the early endosome membrane. The protein localises to the late endosome membrane. In terms of biological role, functions as a negative regulator of the PI3 kinase/PI3K activity associated with endosomal membranes. By modifying the phosphatidylinositol 3-phosphate/PtdInsP3 content of endosomal membranes may regulate endosome fusion, recycling, sorting and early to late endosome transport. This Xenopus tropicalis (Western clawed frog) protein is WD repeat-containing protein 91.